We begin with the raw amino-acid sequence, 51 residues long: Large ribosomal subunit protein bL33 (51 aa).

The interval methionine 1 to aspartate 20 is disordered.

Belongs to the bacterial ribosomal protein bL33 family.

The protein is Large ribosomal subunit protein bL33 of Psychromonas ingrahamii (strain DSM 17664 / CCUG 51855 / 37).